A 32-amino-acid polypeptide reads, in one-letter code: Ranatuerin-2BYa (32 aa).

Cys27 and Cys32 form a disulfide bridge.

In terms of tissue distribution, expressed by the skin glands.

Its subcellular location is the secreted. Its function is as follows. Antibacterial activity against Gram-positive bacterium S.aureus and Gram-negative bacterium E.coli. Weak hemolytic activity. This Rana boylii (Foothill yellow-legged frog) protein is Ranatuerin-2BYa.